Reading from the N-terminus, the 273-residue chain is 3-keto-5-aminohexanoate cleavage enzyme (273 aa).

(5S)-5-amino-3-oxohexanoate is bound at residue Glu14. Positions 46 and 48 each coordinate Zn(2+). Ser82, Gly85, and Ser106 together coordinate (5S)-5-amino-3-oxohexanoate. Residue Glu227 coordinates Zn(2+).

It belongs to the BKACE family. Kce subfamily. In terms of assembly, homotetramer. It depends on Zn(2+) as a cofactor.

It catalyses the reaction (5S)-5-amino-3-oxohexanoate + acetyl-CoA = (3S)-3-aminobutanoyl-CoA + acetoacetate. The protein operates within amino-acid degradation; L-lysine degradation via acetate pathway. Involved in the anaerobic fermentation of lysine. Catalyzes the reversible reaction between 3-keto-5-aminohexanoate (KAH) and acetyl-CoA to form 3-aminobutyryl-CoA and acetoacetate. The reaction involves the deprotonation of KAH, the nucleophilic addition onto acetyl-CoA and the intramolecular transfer of the CoA moiety. This Acetoanaerobium sticklandii (strain ATCC 12662 / DSM 519 / JCM 1433 / CCUG 9281 / NCIMB 10654 / HF) (Clostridium sticklandii) protein is 3-keto-5-aminohexanoate cleavage enzyme.